A 720-amino-acid polypeptide reads, in one-letter code: Putative glutamine--fructose-6-phosphate aminotransferase [isomerizing] (720 aa).

Residue cysteine 2 is the Nucleophile; for GATase activity of the active site. The Glutamine amidotransferase type-2 domain maps to 2 to 321; that stretch reads CGIFGYCNFL…DNDTAHIYDG (320 aa). A compositionally biased stretch (polar residues) spans 266 to 280; the sequence is STTSTFNHGSSTETP. The disordered stretch occupies residues 266 to 285; the sequence is STTSTFNHGSSTETPAENGL. SIS domains are found at residues 393 to 532 and 565 to 710; these read WLTE…DLVS and CDKK…VDLP.

It carries out the reaction D-fructose 6-phosphate + L-glutamine = D-glucosamine 6-phosphate + L-glutamate. It participates in nucleotide-sugar biosynthesis; UDP-N-acetyl-alpha-D-glucosamine biosynthesis; alpha-D-glucosamine 6-phosphate from D-fructose 6-phosphate: step 1/1. Functionally, involved in amino sugar synthesis (formation of chitin, supplies the amino sugars of asparagine-linked oligosaccharides of glycoproteins). This is Putative glutamine--fructose-6-phosphate aminotransferase [isomerizing] from Saccharomyces cerevisiae (strain JAY291) (Baker's yeast).